We begin with the raw amino-acid sequence, 133 residues long: Protein PsiE homolog (133 aa).

Transmembrane regions (helical) follow at residues 13–33 (LQWI…IFLI), 55–75 (VESI…IKYF), 81–101 (FPLR…IIVS), and 105–125 (PMET…LYIS).

Belongs to the PsiE family.

It localises to the cell membrane. The polypeptide is Protein PsiE homolog (Bacillus cereus (strain ATCC 10987 / NRS 248)).